A 102-amino-acid chain; its full sequence is UPF0213 protein Ent638_3592 (102 aa).

Residues 4–79 (VCWFLYLVRT…KQLTKRQKER (76 aa)) form the GIY-YIG domain.

The protein belongs to the UPF0213 family.

This chain is UPF0213 protein Ent638_3592, found in Enterobacter sp. (strain 638).